Reading from the N-terminus, the 499-residue chain is Probable dipeptidase B (499 aa).

C26 is an active-site residue.

This sequence belongs to the peptidase C69 family.

The enzyme catalyses an L-aminoacyl-L-amino acid + H2O = 2 an L-alpha-amino acid. This Streptococcus pyogenes serotype M3 (strain ATCC BAA-595 / MGAS315) protein is Probable dipeptidase B (pepDB).